Here is a 653-residue protein sequence, read N- to C-terminus: DNA polymerase (653 aa).

This sequence belongs to the DNA polymerase type-B family.

It carries out the reaction DNA(n) + a 2'-deoxyribonucleoside 5'-triphosphate = DNA(n+1) + diphosphate. Functionally, replicates viral genomic DNA. The polypeptide is DNA polymerase (Acidianus convivator (ABV)).